The sequence spans 67 residues: Pepsin B (67 aa).

The propeptide at 1–43 (MERIILRKGKSIREAMEEQGVLEKFLKNRPKIDPAAKYHFNND) is activation peptide.

Belongs to the peptidase A1 family.

It localises to the secreted. The enzyme catalyses Degradation of gelatin, little activity on hemoglobin. Specificity on B chain of insulin more restricted than that of pepsin A. Does not cleave 1-Phe-|-Val-2, 4-Gln-|-His-5 or 23-Gly-|-Phe-24.. This chain is Pepsin B (PGB), found in Sus scrofa (Pig).